Reading from the N-terminus, the 455-residue chain is Bifunctional protein GlmU (455 aa).

The tract at residues 1–228 (MTQPLHVIIL…AQEAEGANDP (228 aa)) is pyrophosphorylase. UDP-N-acetyl-alpha-D-glucosamine is bound by residues 10-13 (LAAG), K24, Q76, 81-82 (GT), 103-105 (YGD), G138, E153, N168, and N226. A Mg(2+)-binding site is contributed by D105. N226 is a Mg(2+) binding site. The segment at 229–249 (WQLSQLERAWQRRAVRALCAQ) is linker. The tract at residues 250–455 (GARVRDPARL…DGWKRPLKKS (206 aa)) is N-acetyltransferase. Positions 332 and 350 each coordinate UDP-N-acetyl-alpha-D-glucosamine. The active-site Proton acceptor is H362. 2 residues coordinate UDP-N-acetyl-alpha-D-glucosamine: Y365 and N376. Acetyl-CoA is bound by residues A379, 385-386 (NY), S404, A422, and R439.

It in the N-terminal section; belongs to the N-acetylglucosamine-1-phosphate uridyltransferase family. In the C-terminal section; belongs to the transferase hexapeptide repeat family. In terms of assembly, homotrimer. Mg(2+) is required as a cofactor.

Its subcellular location is the cytoplasm. It catalyses the reaction alpha-D-glucosamine 1-phosphate + acetyl-CoA = N-acetyl-alpha-D-glucosamine 1-phosphate + CoA + H(+). It carries out the reaction N-acetyl-alpha-D-glucosamine 1-phosphate + UTP + H(+) = UDP-N-acetyl-alpha-D-glucosamine + diphosphate. Its pathway is nucleotide-sugar biosynthesis; UDP-N-acetyl-alpha-D-glucosamine biosynthesis; N-acetyl-alpha-D-glucosamine 1-phosphate from alpha-D-glucosamine 6-phosphate (route II): step 2/2. The protein operates within nucleotide-sugar biosynthesis; UDP-N-acetyl-alpha-D-glucosamine biosynthesis; UDP-N-acetyl-alpha-D-glucosamine from N-acetyl-alpha-D-glucosamine 1-phosphate: step 1/1. It participates in bacterial outer membrane biogenesis; LPS lipid A biosynthesis. In terms of biological role, catalyzes the last two sequential reactions in the de novo biosynthetic pathway for UDP-N-acetylglucosamine (UDP-GlcNAc). The C-terminal domain catalyzes the transfer of acetyl group from acetyl coenzyme A to glucosamine-1-phosphate (GlcN-1-P) to produce N-acetylglucosamine-1-phosphate (GlcNAc-1-P), which is converted into UDP-GlcNAc by the transfer of uridine 5-monophosphate (from uridine 5-triphosphate), a reaction catalyzed by the N-terminal domain. The sequence is that of Bifunctional protein GlmU from Stenotrophomonas maltophilia (strain K279a).